We begin with the raw amino-acid sequence, 451 residues long: Velvet complex subunit 2 (451 aa).

3 disordered regions span residues Met1–Ile95, Pro205–Pro312, and Pro426–Tyr451. Composition is skewed to polar residues over residues Thr18 to Arg28, Met40 to Pro62, and Pro205 to Tyr217. Positions Pro92 to Arg428 constitute a Velvet domain. Residues Pro267–Ser283 show a composition bias toward low complexity. Positions Ile427–Gly445 are enriched in basic and acidic residues.

The protein belongs to the velvet family. VelB subfamily. In terms of assembly, component of the heterotrimeric velvet complex composed of LAE1, VEL1 and VEL2; VEL1 acting as a bridging protein between LAE1 and VEL2. Forms a heterodimeric complex with VOS1; the formation of the VEL2-VOS1 complex is light-dependent.

It localises to the nucleus. Its subcellular location is the cytoplasm. Component of the velvet transcription factor complex that controls sexual/asexual developmental ratio in response to light, promoting sexual development in the darkness while stimulating asexual sporulation under illumination. The velvet complex acts as a global regulator for secondary metabolite gene expression. Component of the VEL2-VOS1 heterodimeric complex that plays a dual role in activating genes associated with spore maturation and repressing certain development-associated genes. The VEL2-VOS1 complex binds DNA through the DNA-binding domain of VOS1 that recognizes an 11-nucleotide consensus sequence 5'-CTGGCCGCGGC-3' consisting of two motifs in the promoters of key developmental regulatory genes. Controls the expression of the oxalic acid and melanin gene clusters. Involved in the resistance to oxidative stress. Required for full virulence. In Botryotinia fuckeliana (strain B05.10) (Noble rot fungus), this protein is Velvet complex subunit 2.